Reading from the N-terminus, the 338-residue chain is Fructose-1,6-bisphosphatase class 1 (338 aa).

Positions 94, 116, 118, and 119 each coordinate Mg(2+). Residues 119–122, N210, and K276 each bind substrate; that span reads DGSS. Residue E282 coordinates Mg(2+).

It belongs to the FBPase class 1 family. As to quaternary structure, homotetramer. Mg(2+) is required as a cofactor.

The protein localises to the cytoplasm. The catalysed reaction is beta-D-fructose 1,6-bisphosphate + H2O = beta-D-fructose 6-phosphate + phosphate. Its pathway is carbohydrate biosynthesis; gluconeogenesis. This Paraburkholderia phytofirmans (strain DSM 17436 / LMG 22146 / PsJN) (Burkholderia phytofirmans) protein is Fructose-1,6-bisphosphatase class 1.